The following is a 191-amino-acid chain: UPF0312 protein Shew185_3055 (191 aa).

Residues 1–22 (MKKQLLSALIGASLLAPMAASA) form the signal peptide.

This sequence belongs to the UPF0312 family. Type 1 subfamily.

The protein resides in the periplasm. This Shewanella baltica (strain OS185) protein is UPF0312 protein Shew185_3055.